Consider the following 255-residue polypeptide: uncharacterized protein (255 aa).

Belongs to the methyltransferase superfamily.

This is an uncharacterized protein from Mycolicibacterium gilvum (strain PYR-GCK) (Mycobacterium gilvum (strain PYR-GCK)).